The chain runs to 247 residues: MEMDKRIYLELRNRTPSDVKELVLDNCRSIEGKIEGLTDEFEELEFLSTINVGLTSISNLPKLNKLKKLELSENRISGDLEVLAEKCPNLKHLNLSGNKIKDLSTIEPLKKLENLKSLDLFNCEVTNLNAYRENVFKLLPQVMYLDGYDRDNKEAPDSDVEGYVEDDDEEDEDEEEYDEYAQLVEDEEEEDEEEEGEEEDVSGEEEEDEEGYNDGEVDDEEDEEDAAEEEGSQKRKREPDDEGQEDD.

Threonine 15 is modified (phosphothreonine). Phosphoserine is present on serine 17. LRR repeat units lie at residues 18 to 41, 43 to 64, 65 to 87, and 89 to 110; these read DVKE…TDEF, ELEF…PKLN, KLKK…AEKC, and NLKH…EPLK. Residues 123–161 form the LRRCT domain; sequence CEVTNLNAYRENVFKLLPQVMYLDGYDRDNKEAPDSDVE. The segment at 150–172 is necessary for tumor-suppressive function; that stretch reads RDNKEAPDSDVEGYVEDDDEEDE. Positions 150 to 247 are disordered; it reads RDNKEAPDSD…EPDDEGQEDD (98 aa). A compositionally biased stretch (acidic residues) spans 157 to 230; it reads DSDVEGYVED…EDEEDAAEEE (74 aa). Residues serine 158 and serine 202 each carry the phosphoserine modification. An interaction with E4F1 region spans residues 165-247; sequence EDDDEEDEDE…EPDDEGQEDD (83 aa).

Belongs to the ANP32 family. As to quaternary structure, component of the SET complex, composed of at least ANP32A, APEX1, HMGB2, NME1, SET and TREX1. Directly interacts with SET. Interacts with ATXN1/SCA1. Interacts with MAP1B. Interacts with ELAVL1. Part of the INHAT (inhibitor of histone acetyltransferases) complex. Interacts with E4F1. Phosphorylated on serine residues, at least in part by casein kinase 2/CK2. Post-translationally, some glutamate residues are glycylated by TTLL8. This modification occurs exclusively on glutamate residues and results in a glycine chain on the gamma-carboxyl group. In terms of tissue distribution, widely distributed in the central nervous system, with an abundant expression in the cerebellum.

The protein localises to the nucleus. It localises to the cytoplasm. It is found in the endoplasmic reticulum. In terms of biological role, multifunctional protein that is involved in the regulation of many processes including tumor suppression, apoptosis, cell cycle progression or transcription. Promotes apoptosis by favouring the activation of caspase-9/CASP9 and allowing apoptosome formation. In addition, plays a role in the modulation of histone acetylation and transcription as part of the INHAT (inhibitor of histone acetyltransferases) complex. Inhibits the histone-acetyltranferase activity of EP300/CREBBP (CREB-binding protein) and EP300/CREBBP-associated factor by histone masking. Preferentially binds to unmodified histone H3 and sterically inhibiting its acetylation and phosphorylation leading to cell growth inhibition. Participates in other biochemical processes such as regulation of mRNA nuclear-to-cytoplasmic translocation and stability by its association with ELAVL1 (Hu-antigen R). Plays a role in E4F1-mediated transcriptional repression as well as inhibition of protein phosphatase 2A. This is Acidic leucine-rich nuclear phosphoprotein 32 family member A (Anp32a) from Rattus norvegicus (Rat).